A 178-amino-acid polypeptide reads, in one-letter code: ATP synthase subunit delta (178 aa).

It belongs to the ATPase delta chain family. F-type ATPases have 2 components, F(1) - the catalytic core - and F(0) - the membrane proton channel. F(1) has five subunits: alpha(3), beta(3), gamma(1), delta(1), epsilon(1). F(0) has three main subunits: a(1), b(2) and c(10-14). The alpha and beta chains form an alternating ring which encloses part of the gamma chain. F(1) is attached to F(0) by a central stalk formed by the gamma and epsilon chains, while a peripheral stalk is formed by the delta and b chains.

Its subcellular location is the cell inner membrane. In terms of biological role, f(1)F(0) ATP synthase produces ATP from ADP in the presence of a proton or sodium gradient. F-type ATPases consist of two structural domains, F(1) containing the extramembraneous catalytic core and F(0) containing the membrane proton channel, linked together by a central stalk and a peripheral stalk. During catalysis, ATP synthesis in the catalytic domain of F(1) is coupled via a rotary mechanism of the central stalk subunits to proton translocation. Functionally, this protein is part of the stalk that links CF(0) to CF(1). It either transmits conformational changes from CF(0) to CF(1) or is implicated in proton conduction. The sequence is that of ATP synthase subunit delta from Nitrosospira multiformis (strain ATCC 25196 / NCIMB 11849 / C 71).